Consider the following 146-residue polypeptide: Stress enhanced protein 1, chloroplastic (146 aa).

A chloroplast-targeting transit peptide spans 1 to 73 (MALSQVSASL…GNRAASVSIR (73 aa)). The next 2 membrane-spanning stretches (helical) occupy residues 84–104 (LDIW…TVEI) and 120–140 (LPTV…VFIF).

This sequence belongs to the ELIP/psbS family.

It localises to the plastid. Its subcellular location is the chloroplast thylakoid membrane. Its function is as follows. May be involved in non-photochemical quenching, a process that maintains the balance between dissipation and utilization of light energy to minimize generation of oxidizing molecules, thereby protecting the plant against photo-oxidative damage. May play a photoprotective role in the thylakoid membrane in response to light stress. This Arabidopsis thaliana (Mouse-ear cress) protein is Stress enhanced protein 1, chloroplastic.